Here is a 469-residue protein sequence, read N- to C-terminus: Adenosylhomocysteinase (469 aa).

Substrate is bound by residues T63, D139, and E164. Position 165–167 (165–167 (TTT)) interacts with NAD(+). K194 and D198 together coordinate substrate. Residues N199, 228 to 233 (GYGDVG), E251, N300, 321 to 323 (IGH), and N375 contribute to the NAD(+) site.

Belongs to the adenosylhomocysteinase family. NAD(+) serves as cofactor.

It is found in the cytoplasm. It catalyses the reaction S-adenosyl-L-homocysteine + H2O = L-homocysteine + adenosine. It functions in the pathway amino-acid biosynthesis; L-homocysteine biosynthesis; L-homocysteine from S-adenosyl-L-homocysteine: step 1/1. May play a key role in the regulation of the intracellular concentration of adenosylhomocysteine. This Pseudomonas fluorescens (strain SBW25) protein is Adenosylhomocysteinase.